A 609-amino-acid chain; its full sequence is Glutamine--fructose-6-phosphate aminotransferase [isomerizing] (609 aa).

Cysteine 2 (nucleophile; for GATase activity) is an active-site residue. The Glutamine amidotransferase type-2 domain maps to 2–218; that stretch reads CGIVGAVAQR…EGDVAEVTRR (217 aa). SIS domains follow at residues 286-426 and 458-599; these read AAEF…HNGM and LAED…VDQP. The active-site For Fru-6P isomerization activity is the lysine 604.

As to quaternary structure, homodimer.

Its subcellular location is the cytoplasm. It carries out the reaction D-fructose 6-phosphate + L-glutamine = D-glucosamine 6-phosphate + L-glutamate. Functionally, catalyzes the first step in hexosamine metabolism, converting fructose-6P into glucosamine-6P using glutamine as a nitrogen source. The sequence is that of Glutamine--fructose-6-phosphate aminotransferase [isomerizing] from Shewanella oneidensis (strain ATCC 700550 / JCM 31522 / CIP 106686 / LMG 19005 / NCIMB 14063 / MR-1).